Here is a 335-residue protein sequence, read N- to C-terminus: MGDTYSLVLVAGYLSIFLFIGAIGYFYLSKPRIPSSNVNEQQQQQQQQQQQQQQPQINIEDEPQQRGGIGRMNLRNRRQPIINQRDEDTESSGSDSDNSTNSDNYDDDNGQEGEGEDIGVVAPGIVSNRSGKKIGKKKLEKLKLKDEKRKAREYQEYLREEKKKTDLEKEEALKEKRLEEKENEKLRKEEEERIRIEKERKEDEEYNLLKSQISLQESGITKNEDYDKSLLQLFIKYLKEHKICLLEDIAIEFNIKTNEVIDRIKTLDKQGLISGVIDDRGKFIYITKEEMEAVAKFVNKKGRVNIEQIALESNRLIDFSKKVVDNNDQDPVDTN.

The Lumenal portion of the chain corresponds to 1–6; sequence MGDTYS. The chain crosses the membrane as a helical span at residues 7–27; sequence LVLVAGYLSIFLFIGAIGYFY. Over 28–335 the chain is Cytoplasmic; it reads LSKPRIPSSN…NNDQDPVDTN (308 aa). The tract at residues 37 to 124 is disordered; it reads NVNEQQQQQQ…GEDIGVVAPG (88 aa). 2 stretches are compositionally biased toward low complexity: residues 41-56 and 91-103; these read QQQQQQQQQQQQQQPQ and SSGSDSDNSTNSD. The segment covering 104–117 has biased composition (acidic residues); it reads NYDDDNGQEGEGED.

It belongs to the DDRGK1 family.

The protein localises to the endoplasmic reticulum membrane. Functionally, substrate adapter for ufmylation, the covalent attachment of the ubiquitin-like modifier UFM1 to substrate proteins. The sequence is that of DDRGK domain-containing protein 1 from Dictyostelium discoideum (Social amoeba).